The following is a 262-amino-acid chain: MPTSPSREVAVDATKVELVSKPLLASAALNKFSGYHFNPSSSGVDSNLLILLHGLGDNDSGFFNLGQNLQKTLPQTAILTLQAPLKVPFLEGDHWMWYPAFDQFAELLTKPNPTVTVASVVALLDHLVGKCGWSAGSIHIFGFGQGATLALEVLISWSKSHSQPLGSIVSIHGSFISHPTISSSSTPVLHIYRSAREIPLDSTRWSSHRKSTSALTLHRLRGNEEDESMLKGSEWDSVMSFWSKFFRNRIKWELEGKVVPIG.

This sequence belongs to the AB hydrolase superfamily. AB hydrolase 2 family.

This is an uncharacterized protein from Mycosarcoma maydis (Corn smut fungus).